Consider the following 310-residue polypeptide: HPr kinase/phosphorylase (310 aa).

Catalysis depends on residues His-136 and Lys-157. 151 to 158 is a binding site for ATP; that stretch reads GDSGIGKS. Residue Ser-158 coordinates Mg(2+). Asp-175 acts as the Proton acceptor; for phosphorylation activity. Proton donor; for dephosphorylation activity in catalysis. The important for the catalytic mechanism of both phosphorylation and dephosphorylation stretch occupies residues 199–208; that stretch reads LEIRGLGIIN. Residue Glu-200 coordinates Mg(2+). Arg-241 is an active-site residue. The tract at residues 262-267 is important for the catalytic mechanism of dephosphorylation; sequence PVRPGR.

The protein belongs to the HPrK/P family. Homohexamer. Mg(2+) serves as cofactor.

The enzyme catalyses [HPr protein]-L-serine + ATP = [HPr protein]-O-phospho-L-serine + ADP + H(+). It catalyses the reaction [HPr protein]-O-phospho-L-serine + phosphate + H(+) = [HPr protein]-L-serine + diphosphate. Catalyzes the ATP- as well as the pyrophosphate-dependent phosphorylation of a specific serine residue in HPr, a phosphocarrier protein of the phosphoenolpyruvate-dependent sugar phosphotransferase system (PTS). HprK/P also catalyzes the pyrophosphate-producing, inorganic phosphate-dependent dephosphorylation (phosphorolysis) of seryl-phosphorylated HPr (P-Ser-HPr). The two antagonistic activities of HprK/P are regulated by several intracellular metabolites, which change their concentration in response to the absence or presence of rapidly metabolisable carbon sources (glucose, fructose, etc.) in the growth medium. Therefore, by controlling the phosphorylation state of HPr, HPrK/P is a sensor enzyme that plays a major role in the regulation of carbon metabolism and sugar transport: it mediates carbon catabolite repression (CCR), and regulates PTS-catalyzed carbohydrate uptake and inducer exclusion. This is HPr kinase/phosphorylase from Staphylococcus epidermidis (strain ATCC 35984 / DSM 28319 / BCRC 17069 / CCUG 31568 / BM 3577 / RP62A).